The primary structure comprises 523 residues: UPF0329 protein ECU02_0050 (523 aa).

Residues 326–386 (EEKAKSKKRG…KTGKKSEGGR (61 aa)) are disordered. The segment covering 330-339 (KSKKRGKRKS) has biased composition (basic residues). Positions 344–353 (EAKEEEKKES) are enriched in basic and acidic residues. The span at 354–368 (ETEEVEAGEEVEMPS) shows a compositional bias: acidic residues.

Belongs to the UPF0329 family.

This is UPF0329 protein ECU02_0050 from Encephalitozoon cuniculi (strain GB-M1) (Microsporidian parasite).